A 128-amino-acid chain; its full sequence is Fruiting body differentiation protein 16 (128 aa).

The N-terminal stretch at 1-19 (MLFSHIVFVALSVFGLVQA) is a signal peptide.

Its function is as follows. Plays a role in the regulation of fruiting body development. This chain is Fruiting body differentiation protein 16, found in Flammulina velutipes (Agaricus velutipes).